The sequence spans 454 residues: NADH-quinone oxidoreductase subunit H (454 aa).

9 helical membrane-spanning segments follow: residues 18-38 (WWLV…TVLF), 88-108 (VVYV…IAVI), 131-151 (LPIA…GIVL), 172-192 (MISY…YSGS), 206-226 (WYIV…VGET), 256-276 (FMLA…TLFL), 296-316 (WWPM…FIWL), 328-348 (LMKL…MLVA), and 360-380 (FADI…LSFV). The segment at 395-454 (AEEPAAFDPMAGGFPVPPLPGQTLPPVPRRRPRRDRELIVSGGPDTASDGPANGKEASDG) is disordered. Pro residues predominate over residues 409-421 (PVPPLPGQTLPPV).

The protein belongs to the complex I subunit 1 family. In terms of assembly, NDH-1 is composed of 14 different subunits. Subunits NuoA, H, J, K, L, M, N constitute the membrane sector of the complex.

It localises to the cell membrane. The catalysed reaction is a quinone + NADH + 5 H(+)(in) = a quinol + NAD(+) + 4 H(+)(out). Its function is as follows. NDH-1 shuttles electrons from NADH, via FMN and iron-sulfur (Fe-S) centers, to quinones in the respiratory chain. The immediate electron acceptor for the enzyme in this species is believed to be ubiquinone. Couples the redox reaction to proton translocation (for every two electrons transferred, four hydrogen ions are translocated across the cytoplasmic membrane), and thus conserves the redox energy in a proton gradient. This subunit may bind ubiquinone. This Streptomyces avermitilis (strain ATCC 31267 / DSM 46492 / JCM 5070 / NBRC 14893 / NCIMB 12804 / NRRL 8165 / MA-4680) protein is NADH-quinone oxidoreductase subunit H.